The primary structure comprises 538 residues: Endoglucanase 16 (538 aa).

An N-terminal signal peptide occupies residues 1 to 26; it reads MRWRRVGDVVAVALLLGAAAAAAAAA. Asp83 functions as the Nucleophile in the catalytic mechanism. Catalysis depends on residues His431, Asp483, and Glu492. The disordered stretch occupies residues 513 to 538; it reads RQESPSTTTTTTATTSSPEMGLSVNR. The segment covering 516-530 has biased composition (low complexity); that stretch reads SPSTTTTTTATTSSP.

It belongs to the glycosyl hydrolase 9 (cellulase E) family.

It localises to the secreted. The enzyme catalyses Endohydrolysis of (1-&gt;4)-beta-D-glucosidic linkages in cellulose, lichenin and cereal beta-D-glucans.. This is Endoglucanase 16 from Oryza sativa subsp. japonica (Rice).